The primary structure comprises 1281 residues: MVRIAEYSRTATFAWSNDRIPYLVSGTASGTIDADFSNESKLELWSLLGTDADKPSHSVSTDAKFKDLDWSADNKYIAGAMDNGAVEIYEFNSSKQELKKQGSFKNHSTVVRTVKFNSKQNNVLLSGGNSQEIFIWDLNKLLDSKANYQPLTPGVSMSPIDEIHSLSWNKSLAHVFASASNSSFASIWDLKAKKEVIHLSYTSQNTGLKSDFSAVEWHPLNSTRVATATSNDNEPLILVWDLRNSNTPLQTLSAANNQGHGHSKGILSLDWCQQDENLLLSSARDSSVMLWNPQSGEALTEYNTTGNWCFKSKFAPQAPDLFAFATLDGKKIEVQTLQNYETTLDEEVSKTKQQESETDFWNHVSEEKAEIKSTVVHLQAPSWYGNKSASAQWAFGGKLVQVTKDGKGVEVNKPEITDLKSDDTLKNALASKDFQPLINQRLVKVVNETNEEDWNLLEKLSMDGKEEFLKEALELDEEEDEEKDQEGKDGDEFFQKIESNFQPSGSFKIDSNEESVINNILSGNNSKAVSELLKSGSILEAFVVAVTCNDEKLKEDVKDAYFAAHGKESSLSRVLFSSSKKNSDDIVENLDISQWKYITKSIYNFHANDEVERTNKLLQLGDRLLANKNRQDALVIYIAAGSLDKIATVWLNEFSTLENKIKDQEKTIYEAHIECLTEFVERFTILSNFVGKKQKITNESLISKFLEFINITSATGNFDLALLFLDILPEDNEYVIAEKKRVMVASGKVVDQSQSRKGKYGSHANLASAGFSGHAKQPVNLPPTAAPFAAQTMGGYAPQAVGAVPTPAVPVPQTRNASVSIKSNPYGPAGTNVGTSDNKFNAYAPPTHTQVPVATPVTSSFIPPANPYSNVAAQSLAMAAEQNAMSPNLAGSAPPVKSPSVYSGQTPHLNKKANDGWNDLALPVKEKPQRAKPVTVAPSPILAPATNGAAAAVPTKSIGTVFPPTGGNSRVPSSMVSPPPPQKRASRTPSLINIDDVVNARPKAHTSIYAPQTTQAGPAPVAPQSDIPLAPTANPYAPNQSVGSTPLQKPVNPYAPPAQQAGIPSAANPYASQIPSKAPVNAPPPMSSKKAPVGPPPMSSRKKAHEGKTLSHEAASVLDSSKPVQTQPIASELSREPAPVPTSASQTQVPPPVQETPARNTISPIDMAAPAVEQGISAAQQPIRDFFSSELARVTPLTPKEYNKQLKDCDKRLKILFTHLEKNLLSQPTVDKLLHIIELLKEKKYHEAMEVHKDIATNHAEEGGNWLTGVKRLISISEATA.

7 WD repeats span residues Ala5–Ser46, Ser60–Lys99, Asn106–Ala146, Ser158–His198, Gly207–Gln250, Gly261–Glu301, and Gly329–Ile371. One copy of the WD 8; interaction with SEC13 repeat lies at Gln392–Asn412. 2 disordered regions span residues Thr960–Leu991 and Ala1010–Pro1157. 2 stretches are compositionally biased toward polar residues: residues Ala1037 to Leu1047 and Leu1118 to Ile1129.

Belongs to the WD repeat SEC31 family. As to quaternary structure, the COPII coat is composed of at least 5 proteins: the SEC23/24 complex, the SEC13/31 complex, and the protein SAR1. SEC13 and SEC31 make a 2:2 tetramer that forms the edge element of the COPII outer coat. The tetramer self-assembles in multiple copies to form the complete polyhedral cage. Interacts (via WD 8) with SEC13.

Its subcellular location is the cytoplasmic vesicle. It is found in the COPII-coated vesicle membrane. The protein resides in the endoplasmic reticulum membrane. Component of the coat protein complex II (COPII) which promotes the formation of transport vesicles from the endoplasmic reticulum (ER). The coat has two main functions, the physical deformation of the endoplasmic reticulum membrane into vesicles and the selection of cargo molecules. This is Protein transport protein SEC31 (SEC31) from Candida glabrata (strain ATCC 2001 / BCRC 20586 / JCM 3761 / NBRC 0622 / NRRL Y-65 / CBS 138) (Yeast).